The sequence spans 401 residues: Phosrestin-1 (401 aa).

It belongs to the arrestin family. In terms of tissue distribution, inner and outer segments, and the inner plexiform regions of the retina.

In terms of biological role, undergoes light-induced phosphorylation, probably plays an important role in the photoreceptor transduction. The chain is Phosrestin-1 (Arr2) from Drosophila miranda (Fruit fly).